The primary structure comprises 593 residues: MRVSRLLLVTLRDVPAEAEITSHQLLLRAGYIRRVGSGIYAYLPLMWRVLQKITAVVREEMNRAGAQETLLPQLHPAELWQKSGRWQGYTAGEGIMFHLEDRQGRELGLGPTHEEVITSLAGELLRSYRQLPVNLYQIQTKFRDEIRPRFGLMRGREFIMKDAYSFHASEADLRETYGAMDQAYRRIFERCGLDAVPVDADSGAIGGAASQEFMVTADAGEDLILISDDGQYAANLEKAVSIPSAASPLPDGPEESIPTPGLGSIESLCDTKCWDPSQVVKVLLFVATLDDETLQPLLVSLRGDQELNPTKVVNAVSRTLNKGVLDCRPITPDYTNRQQIDPIPFGSIGPDLSDDVLKGAKTWQPTFLRLADETASELGSFICGANQPDLHRFNTSWTAIEQKPTTLDLRNARAGDVCQHNLESRLTEKRGIEVGHIFQLGRKYSEAMESGFTNENGKTEPFWMGCYGIGVSRLAQAAVEQHHDDSGICWPTAIAPFEAIVVVANIQDDTQGQLGEALYAELQAADVDVLLDDRKERAGVKFKDADLIGIPWRIVVGRDASEGIVELVRRSSREVRKLPHAEAVSCLIKALHP.

This sequence belongs to the class-II aminoacyl-tRNA synthetase family. ProS type 1 subfamily. In terms of assembly, homodimer.

The protein resides in the cytoplasm. The enzyme catalyses tRNA(Pro) + L-proline + ATP = L-prolyl-tRNA(Pro) + AMP + diphosphate. Catalyzes the attachment of proline to tRNA(Pro) in a two-step reaction: proline is first activated by ATP to form Pro-AMP and then transferred to the acceptor end of tRNA(Pro). As ProRS can inadvertently accommodate and process non-cognate amino acids such as alanine and cysteine, to avoid such errors it has two additional distinct editing activities against alanine. One activity is designated as 'pretransfer' editing and involves the tRNA(Pro)-independent hydrolysis of activated Ala-AMP. The other activity is designated 'posttransfer' editing and involves deacylation of mischarged Ala-tRNA(Pro). The misacylated Cys-tRNA(Pro) is not edited by ProRS. The polypeptide is Proline--tRNA ligase (Synechococcus sp. (strain CC9605)).